The chain runs to 187 residues: Large ribosomal subunit protein uL5 (187 aa).

Belongs to the universal ribosomal protein uL5 family. As to quaternary structure, part of the 50S ribosomal subunit; part of the 5S rRNA/L5/L18/L25 subcomplex. Contacts the 5S rRNA and the P site tRNA. Forms a bridge to the 30S subunit in the 70S ribosome.

This is one of the proteins that bind and probably mediate the attachment of the 5S RNA into the large ribosomal subunit, where it forms part of the central protuberance. In the 70S ribosome it contacts protein S13 of the 30S subunit (bridge B1b), connecting the 2 subunits; this bridge is implicated in subunit movement. Contacts the P site tRNA; the 5S rRNA and some of its associated proteins might help stabilize positioning of ribosome-bound tRNAs. The polypeptide is Large ribosomal subunit protein uL5 (Mycobacterium avium (strain 104)).